The sequence spans 348 residues: Histone PARylation factor 1 (348 aa).

A compositionally biased stretch (basic residues) spans 1–10 (MAGRGKRKPR). A disordered region spans residues 1–38 (MAGRGKRKPRSLPQTETPNGEVKKAKEGLKDDKTSVGE). Basic and acidic residues predominate over residues 21-38 (EVKKAKEGLKDDKTSVGE). Positions 170–200 (LQKKKKEKRQQKDDAALNRLEEDLKREAERL) form a coiled coil. Glutamate 285 functions as the Proton donor in the catalytic mechanism.

This sequence belongs to the HPF1 family. Interacts with PARP1 (via the PARP catalytic domain). Interacts with PARP2 (via the PARP catalytic domain). Interacts with core nucleosomes in a parp1- and parp2-dependent manner. In adult, mainly expressed in gonads.

It localises to the chromosome. Its subcellular location is the nucleus. Cofactor for serine ADP-ribosylation that confers serine specificity on parp1 and parp2 and plays a key role in DNA damage response. Initiates the repair of double-strand DNA breaks: recruited to DNA damage sites by parp1 and parp2 and switches the amino acid specificity of parp1 and parp2 from aspartate or glutamate to serine residues, licensing serine ADP-ribosylation of target proteins. Serine ADP-ribosylation of target proteins, such as histones, promotes decompaction of chromatin and the recruitment of repair factors leading to the reparation of DNA strand breaks. Serine ADP-ribosylation of proteins constitutes the primary form of ADP-ribosylation of proteins in response to DNA damage. Hpf1 acts by completing the active site of parp1 and parp2: forms a composite active site composed of residues from Hpf1 and parp1 or parp2. While hpf1 promotes the initiation of serine ADP-ribosylation, it restricts the polymerase activity of parp1 and parp2 in order to limit the length of poly-ADP-ribose chains. Hpf1 also promotes tyrosine ADP-ribosylation, probably by conferring tyrosine specificity on parp1. The sequence is that of Histone PARylation factor 1 from Danio rerio (Zebrafish).